We begin with the raw amino-acid sequence, 819 residues long: Leucine--tRNA ligase (819 aa).

Residues 40-51 (PYPSGAGLHVGH) carry the 'HIGH' region motif. The 'KMSKS' region motif lies at 600–604 (KMSKS). K603 is a binding site for ATP.

Belongs to the class-I aminoacyl-tRNA synthetase family.

It is found in the cytoplasm. The catalysed reaction is tRNA(Leu) + L-leucine + ATP = L-leucyl-tRNA(Leu) + AMP + diphosphate. In Chlamydia trachomatis serovar D (strain ATCC VR-885 / DSM 19411 / UW-3/Cx), this protein is Leucine--tRNA ligase.